Reading from the N-terminus, the 150-residue chain is 5-hydroxytryptamine receptor 1B (150 aa).

Residues 1–83 lie on the Extracellular side of the membrane; the sequence is VEARSRILKQ…AARERKATKT (83 aa). Positions 27–40 are enriched in polar residues; sequence DSPGSTSSVTSINS. The disordered stretch occupies residues 27–50; that stretch reads DSPGSTSSVTSINSRAPDLPSESG. A helical membrane pass occupies residues 84-105; that stretch reads LGIILGAFIVCWLPFFIISLAM. At 106-115 the chain is on the cytoplasmic side; that stretch reads PICKDACWFH. A helical membrane pass occupies residues 116–138; sequence LAIFDFFTWLGYLNSLINPIIYT. The NPxxY motif; important for ligand-induced conformation changes and signaling motif lies at 133–137; sequence NPIIY. Residues 139–150 lie on the Extracellular side of the membrane; sequence MFNEDFKQAFHK.

This sequence belongs to the G-protein coupled receptor 1 family. Homodimer. Heterodimer with HTR1D. Phosphorylated. Desensitization of the receptor may be mediated by its phosphorylation. In terms of processing, palmitoylated.

It localises to the cell membrane. Its function is as follows. G-protein coupled receptor for 5-hydroxytryptamine (serotonin). Also functions as a receptor for ergot alkaloid derivatives, various anxiolytic and antidepressant drugs and other psychoactive substances, such as lysergic acid diethylamide (LSD). Ligand binding causes a conformation change that triggers signaling via guanine nucleotide-binding proteins (G proteins) and modulates the activity of downstream effectors, such as adenylate cyclase. HTR1B is coupled to G(i)/G(o) G alpha proteins and mediates inhibitory neurotransmission by inhibiting adenylate cyclase activity. Arrestin family members inhibit signaling via G proteins and mediate activation of alternative signaling pathways. Regulates the release of 5-hydroxytryptamine, dopamine and acetylcholine in the brain, and thereby affects neural activity, nociceptive processing, pain perception, mood and behavior. Besides, plays a role in vasoconstriction of cerebral arteries. The protein is 5-hydroxytryptamine receptor 1B (HTR1B) of Sus scrofa (Pig).